We begin with the raw amino-acid sequence, 144 residues long: Large ribosomal subunit protein uL16c (144 aa).

It belongs to the universal ribosomal protein uL16 family. As to quaternary structure, part of the 50S ribosomal subunit.

The protein resides in the plastid. The protein localises to the chloroplast. The chain is Large ribosomal subunit protein uL16c from Chara vulgaris (Common stonewort).